The primary structure comprises 185 residues: Lysine-rich arabinogalactan protein 17 (185 aa).

A signal peptide spans 1–21 (MTRNILLTVTLICIVFITVGG). Positions 25–160 (ATAPIHSPST…FSPAADDQSG (136 aa)) are disordered. Residues 43–68 (SPAISPAAPTPESTEAPAKTPVEAPV) show a composition bias toward low complexity. Residues 69–88 (EAPPSPTPASTPQISPPAPS) show a composition bias toward pro residues. The span at 111–122 (TKHKKKTKKHKT) shows a compositional bias: basic residues. Over residues 135 to 146 (PPAPPGEAPGPG) the composition is skewed to pro residues. The GPI-anchor amidated serine moiety is linked to residue Ser159. Residues 160 to 185 (GAQRISVVIQMVGAAAIAWSLLVLAF) constitute a propeptide, removed in mature form.

The protein belongs to the lysine-rich AGP family. O-glycosylated on the hydroxyproline residues. Predominantly expressed in open flowers. Also expressed in leaves and stems, and at a lower level in roots.

It localises to the cell membrane. Proteoglycan that seems to be implicated in diverse developmental roles such as differentiation, cell-cell recognition, embryogenesis and programmed cell death. In Arabidopsis thaliana (Mouse-ear cress), this protein is Lysine-rich arabinogalactan protein 17 (AGP17).